The primary structure comprises 248 residues: 5'-nucleotidase SurE (248 aa).

4 residues coordinate a divalent metal cation: Asp-8, Asp-9, Ser-39, and Asn-91.

The protein belongs to the SurE nucleotidase family. The cofactor is a divalent metal cation.

The protein localises to the cytoplasm. The enzyme catalyses a ribonucleoside 5'-phosphate + H2O = a ribonucleoside + phosphate. Nucleotidase that shows phosphatase activity on nucleoside 5'-monophosphates. This chain is 5'-nucleotidase SurE, found in Geotalea uraniireducens (strain Rf4) (Geobacter uraniireducens).